A 315-amino-acid polypeptide reads, in one-letter code: Methionyl-tRNA formyltransferase (315 aa).

113 to 116 (SLLP) contributes to the (6S)-5,6,7,8-tetrahydrofolate binding site.

It belongs to the Fmt family.

It catalyses the reaction L-methionyl-tRNA(fMet) + (6R)-10-formyltetrahydrofolate = N-formyl-L-methionyl-tRNA(fMet) + (6S)-5,6,7,8-tetrahydrofolate + H(+). Its function is as follows. Attaches a formyl group to the free amino group of methionyl-tRNA(fMet). The formyl group appears to play a dual role in the initiator identity of N-formylmethionyl-tRNA by promoting its recognition by IF2 and preventing the misappropriation of this tRNA by the elongation apparatus. The chain is Methionyl-tRNA formyltransferase from Shigella flexneri serotype 5b (strain 8401).